Consider the following 1184-residue polypeptide: Fibulin-2 (1184 aa).

A signal peptide spans 1-27; sequence MVLLWEPAGAWLALGLALALGPSVAAA. The tract at residues 28–177 is subdomain NA (Cys-rich); it reads APRQDCTGVE…ELICYQLPGC (150 aa). Positions 28–444 are n; it reads APRQDCTGVE…EGSTKDLIET (417 aa). Positions 178-444 are subdomain NB (Cys-free); it reads HGNFSDAEEG…EGSTKDLIET (267 aa). N-linked (GlcNAc...) asparagine glycosylation occurs at Asn-180. Disordered regions lie at residues 221 to 293 and 399 to 437; these read VQAG…MAVT and IPPT…PEGS. Over residues 224–236 the composition is skewed to gly residues; sequence GAGGPPAALGGGS. A compositionally biased stretch (low complexity) spans 252–261; that stretch reads PRPTAAAALG. Over residues 276-288 the composition is skewed to acidic residues; sequence DSEEEEEEEEERE. The residue at position 277 (Ser-277) is a Phosphoserine. The segment covering 423–436 has biased composition (polar residues); it reads PNSVHSIPRSSPEG. Cystine bridges form between Cys-445–Cys-472, Cys-446–Cys-479, Cys-459–Cys-480, Cys-489–Cys-518, Cys-502–Cys-519, Cys-521–Cys-545, Cys-522–Cys-552, Cys-535–Cys-553, Cys-608–Cys-620, Cys-616–Cys-629, Cys-631–Cys-644, Cys-683–Cys-693, Cys-689–Cys-702, Cys-704–Cys-717, Cys-723–Cys-736, Cys-730–Cys-745, Cys-751–Cys-762, Cys-768–Cys-781, Cys-775–Cys-790, Cys-796–Cys-808, Cys-814–Cys-827, Cys-821–Cys-836, Cys-843–Cys-856, Cys-862–Cys-875, Cys-869–Cys-884, Cys-886–Cys-899, Cys-905–Cys-917, Cys-913–Cys-926, Cys-928–Cys-941, Cys-947–Cys-956, Cys-952–Cys-965, Cys-967–Cys-980, Cys-986–Cys-998, Cys-994–Cys-1007, Cys-1009–Cys-1023, Cys-1029–Cys-1042, Cys-1036–Cys-1051, and Cys-1056–Cys-1068. Anaphylatoxin-like domains are found at residues 445-480, 488-519, and 521-553; these read CCAA…RHCC, SCMA…KQCC, and CCGL…LSCC. A glycan (N-linked (GlcNAc...) asparagine) is linked at Asn-507. In terms of domain architecture, EGF-like 1; calcium-binding spans 604-645; the sequence is DQDECLLLPGELCQHLCINTVGSYHCACFPGFSLQDDGRTCR. Residues 679-718 enclose the EGF-like 2 domain; the sequence is QPNTCKDNGPCKQVCSTVGGSAICSCFPGYAIMADGVSCE. In terms of domain architecture, EGF-like 3; calcium-binding spans 719 to 763; it reads DINECVTDLHTCSRGEHCVNTLGSFHCYKALTCEPGYALKDGECE. Positions 764-809 constitute an EGF-like 4; calcium-binding domain; sequence DVDECAMGTHTCQPGFLCQNTKGSFYCQARQRCMDGFLQDPEGNCV. In terms of domain architecture, EGF-like 5; calcium-binding spans 810–857; that stretch reads DINECTSLSEPCRPGFSCINTVGSYTCQRNPLICARGYHASDDGTKCV. Residues 858-900 form the EGF-like 6; calcium-binding domain; that stretch reads DVNECETGVHRCGEGQVCHNLPGSYRCDCKAGFQRDAFGRGCI. An EGF-like 7; calcium-binding domain is found at 901 to 942; it reads DVNECWASPGRLCQHTCENTLGSYRCSCASGFLLAADGKRCE. The EGF-like 8; calcium-binding domain maps to 943 to 981; that stretch reads DVNECEAQRCSQECANIYGSYQCYCRQGYQLAEDGHTCT. In terms of domain architecture, EGF-like 9; calcium-binding spans 982–1024; sequence DIDECAQGAGILCTFRCLNVPGSYQCACPEQGYTMTANGRSCK. Residues 1025-1069 form the EGF-like 10; calcium-binding domain; the sequence is DVDECALGTHNCSEAETCHNIQGSFRCLRFECPPNYVQVSKTKCE. N-linked (GlcNAc...) asparagine glycosylation is present at Asn-1035. The domain III stretch occupies residues 1070–1184; sequence RTTCHDFLEC…MHIFFTTFAL (115 aa).

Belongs to the fibulin family. As to quaternary structure, homotrimer; disulfide-linked. Interacts with LAMA2. Interacts with FBN1 (via N-terminal domain). Forms a ternary complex with ELN and FBN1. In terms of processing, O-glycosylated with core 1 or possibly core 8 glycans. It is unsure if the O-glycosylation is on Thr-347 or Ser-348. In terms of tissue distribution, component of both basement membranes and other connective tissues. Expressed in heart, placenta and ovary.

It is found in the secreted. The protein localises to the extracellular space. The protein resides in the extracellular matrix. Functionally, its binding to fibronectin and some other ligands is calcium dependent. May act as an adapter that mediates the interaction between FBN1 and ELN. The protein is Fibulin-2 (FBLN2) of Homo sapiens (Human).